Consider the following 335-residue polypeptide: Ferredoxin--NADP reductase (335 aa).

Positions 35, 43, 48, 88, 122, 287, and 328 each coordinate FAD.

Belongs to the ferredoxin--NADP reductase type 2 family. As to quaternary structure, homodimer. FAD serves as cofactor.

The enzyme catalyses 2 reduced [2Fe-2S]-[ferredoxin] + NADP(+) + H(+) = 2 oxidized [2Fe-2S]-[ferredoxin] + NADPH. The chain is Ferredoxin--NADP reductase from Thermus thermophilus (strain ATCC BAA-163 / DSM 7039 / HB27).